A 280-amino-acid polypeptide reads, in one-letter code: BURP domain protein USPL1 (280 aa).

An N-terminal signal peptide occupies residues 1–24 (MASTFRLSISFLTLILFSLWVVEA). The BURP domain occupies 58 to 280 (YFTLNDLKLG…PLDNIVWVTK (223 aa)).

Expressed in cotyledons, radicle, floral buds, open flowers, roots and developing seeds, but not in leaves. Highly expressed in the root tips. Detected in young leaves, hypocotyls, stems and mature seed funiculum.

Its subcellular location is the protein storage vacuole. The protein resides in the golgi apparatus. It is found in the golgi stack. It localises to the trans-Golgi network. The protein localises to the prevacuolar compartment. In terms of biological role, associated with the protein storage vacuole formation. The sequence is that of BURP domain protein USPL1 from Arabidopsis thaliana (Mouse-ear cress).